The sequence spans 268 residues: Small ribosomal subunit protein uS3 (268 aa).

One can recognise a KH type-2 domain in the interval 40-110 (IRNLFFINYR…KLDLTINEIG (71 aa)).

It belongs to the universal ribosomal protein uS3 family. In terms of assembly, part of the 30S ribosomal subunit. Forms a tight complex with proteins S10 and S14.

In terms of biological role, binds the lower part of the 30S subunit head. Binds mRNA in the 70S ribosome, positioning it for translation. This chain is Small ribosomal subunit protein uS3, found in Mycoplasma genitalium (strain ATCC 33530 / DSM 19775 / NCTC 10195 / G37) (Mycoplasmoides genitalium).